We begin with the raw amino-acid sequence, 593 residues long: Probable metalloprotease ARX1 (593 aa).

It belongs to the peptidase M24 family. In terms of assembly, component of the nucleoplasmic and cytoplasmic pre-60S ribosomal particles. Interacts directly with REI1.

It is found in the cytoplasm. It localises to the nucleus. In terms of biological role, probable metalloprotease involved in proper assembly of pre-ribosomal particles during the biogenesis of the 60S ribosomal subunit. Accompanies the pre-60S particles to the cytoplasm. The chain is Probable metalloprotease ARX1 (ARX1) from Saccharomyces cerevisiae (strain ATCC 204508 / S288c) (Baker's yeast).